We begin with the raw amino-acid sequence, 119 residues long: MICOS complex subunit MIC13 (119 aa).

Residues 1–7 (MVARVWS) lie on the Mitochondrial matrix side of the membrane. Residues 8-26 (LMRFLIKGSVAGGAVYLVY) traverse the membrane as a helical segment. At 27–119 (DQELLGPSDK…GWEYLKEHSK (93 aa)) the chain is on the mitochondrial intermembrane side.

It belongs to the MICOS complex subunit Mic13 family. Component of the mitochondrial contact site and cristae organizing system (MICOS) complex, composed of at least MICOS10/MIC10, CHCHD3/MIC19, CHCHD6/MIC25, APOO/MIC26, MICOS13/MIC13, APOOL/MIC27 and IMMT/MIC60. The MICOS complex associates with mitochondrial outer membrane proteins SAMM50, MTX1 and MTX2 (together described as components of the mitochondrial outer membrane sorting assembly machinery (SAM) complex) and DNAJC11, mitochondrial inner membrane protein TMEM11 and with HSPA9. The MICOS and SAM complexes together with DNAJC11 are part of a large protein complex spanning both membranes termed the mitochondrial intermembrane space bridging (MIB) complex.

The protein resides in the mitochondrion inner membrane. Functionally, component of the MICOS complex, a large protein complex of the mitochondrial inner membrane that plays crucial roles in the maintenance of crista junctions, inner membrane architecture, and formation of contact sites to the outer membrane. Constituent of mature MICOS complex, it is required for the formation of cristae junction (CJ) and maintenance of cristae morphology. Required for the incorporation of MICOS10/MIC10 into the MICOS complex. The sequence is that of MICOS complex subunit MIC13 (Micos13) from Mus musculus (Mouse).